A 577-amino-acid chain; its full sequence is 2-succinyl-5-enolpyruvyl-6-hydroxy-3-cyclohexene-1-carboxylate synthase (577 aa).

This sequence belongs to the TPP enzyme family. MenD subfamily. In terms of assembly, homodimer. It depends on Mg(2+) as a cofactor. Mn(2+) is required as a cofactor. Thiamine diphosphate serves as cofactor.

The catalysed reaction is isochorismate + 2-oxoglutarate + H(+) = 5-enolpyruvoyl-6-hydroxy-2-succinyl-cyclohex-3-ene-1-carboxylate + CO2. It participates in quinol/quinone metabolism; 1,4-dihydroxy-2-naphthoate biosynthesis; 1,4-dihydroxy-2-naphthoate from chorismate: step 2/7. Its pathway is cofactor biosynthesis; phylloquinone biosynthesis. In terms of biological role, catalyzes the thiamine diphosphate-dependent decarboxylation of 2-oxoglutarate and the subsequent addition of the resulting succinic semialdehyde-thiamine pyrophosphate anion to isochorismate to yield 2-succinyl-5-enolpyruvyl-6-hydroxy-3-cyclohexene-1-carboxylate (SEPHCHC). The sequence is that of 2-succinyl-5-enolpyruvyl-6-hydroxy-3-cyclohexene-1-carboxylate synthase from Synechococcus sp. (strain CC9311).